The following is a 78-amino-acid chain: Gas vesicle protein A (78 aa).

An alpha helix 1 region spans residues 9–19 (LAEVLDRVLDK). A beta-strand 1 region spans residues 23–31 (VDVWARISL). Residues 32-34 (VGI) form a beta turn region. Positions 35–43 (EILTVEARV) are beta-strand 2. The alpha helix 2 stretch occupies residues 48–67 (VDTFLHYAEEIAKIEQAELT).

It belongs to the gas vesicle GvpA family. The gas vesicle shell is 2 nm thick and consists of a single layer of this protein. It forms helical ribs nearly perpendicular to the long axis of the vesicle. Modeled as antiparallel homodimers.

Its subcellular location is the gas vesicle shell. Gas vesicles are hollow, gas filled proteinaceous nanostructures found in some microorganisms. During planktonic growth they allow positioning of the organism at a favorable depth for light or nutrient acquisition. GvpA forms the protein shell. This gene replaces p-gvpA of H.salinarum very poorly, only about 1% of GVs are formed; the few gas vesicles formed are quite strong with a very high critical collapse pressure (CCP) of 0.213 MPa. In terms of biological role, expression of a 9.5 kb mc-vac DNA fragment containing 2 divergently transcribed regions (gvpD-gvpE-gvpF-gvpG-gvpH-gvpI-gvpJ-gvpK-gvpL-gvpM and gvpA-gvpC-gvpN-gvpO) allows H.volcanii to produce gas vesicles. The polypeptide is Gas vesicle protein A (Haloferax mediterranei (strain ATCC 33500 / DSM 1411 / JCM 8866 / NBRC 14739 / NCIMB 2177 / R-4) (Halobacterium mediterranei)).